The chain runs to 1130 residues: MQPPTRAPFFPFSLLRGRKARETCTCRSVASTEGPNTFGPRARPGCHAHQVAPSKESFHSSAFQLVSASRLSPLMSSCFVSFLRYPSFRPSAPFSAPPSSSTVPISTPSDFSHSAPASWRCVPTAPSALHAPFSFTTQAAHLSSCVFDGCSRLPCSEPGSPQTLQRALATTSATAFLRTACMSHRLRRRPDAWTSGCSGQTDNATASPCVRPLLRPPVDTASRAAANDKDAPQPTCFWRNARTSRAVHRNQTDMNFSSFSCSLRPCRHTLAKAAGHHAPLSRHSLQSLPESRIRGGTVSRGDSPGSLTLSPRNMSSDAMPVHPLYFPSAVPFSTTSGSNSSTFSCPSPSSSTSSTSSTSSTSSTSSTSSTSSTSSTSSTSSTSSPFLLSRSHSVDCRACPVSRAPPNPTSLQLLFSLFPFLWPTALKDRLRVLGSVACLVTAKVLTIQAPLLLANLVDAFQVLPHNSPLSPSGASPSSGDTSLLASSGETSSSLSPSAAPAEGAREAGKSGESAGRERRDEGSTVRLSPLAEGPASPATEERTAAGKAGTSVGGRDAGAVHALDTEHLRNTAQIVSVPLGVVCGFPVARIAATGFNELRSTLFTRVSQNASCDFSCHAFLHLHALALFHDKRAGELSVLISRGMKSVTALLNVLLFQMVPTALEFALVLYLLGSKVGGPVACITSLTMAVYVAFTAAVTARRTKIRKEMIAAEQQSVGLLVDSLANAEAVRFFTAEKGELSRFEAVQRRYAEKHVSVNQSLAFLNFGQQLIFNVGVLGSLAYTASQVAAGLLPVGHIVLVSSLLLQLAVPLNFVGTIYRETSLNLADLEKLYELMNHHPPIVNPPDARPFVLKGGAVAFENVRFAYPPSPLRPGSLPSKTGDDEKPEASRMLLDDVSFSVDAGKKVAIVGPSGVGKSTLIKLLFRMFDPASGTVRIDDQDVKELDLHSFRRQIGVVPQDMVLFNDTIEFNIKYGCPSATDEEMRAAAKQAEIDDVIMRMPQGYSTVVGERGLKLSGGERQRIGIARCLLRNPAIAVFDEATSALDSHTEQKILKAFRAMARGRTTLVIAHRLSTISDADKIIYLKEGKIAEMGTHAELLEKERGLYRALWESQQHQEQEEAVSTPDLTLS.

A mitochondrion-targeting transit peptide spans 1–65 (MQPPTRAPFF…ESFHSSAFQL (65 aa)). Disordered regions lie at residues 191–212 (DAWTSGCSGQTDNATASPCVRP), 276–315 (HHAPLSRHSLQSLPESRIRGGTVSRGDSPGSLTLSPRNMS), and 341–385 (STFS…TSSP). Composition is skewed to polar residues over residues 195–206 (SGCSGQTDNATA) and 305–315 (GSLTLSPRNMS). The chain crosses the membrane as a helical span at residues 406 to 426 (PNPTSLQLLFSLFPFLWPTAL). The segment covering 468 to 502 (PLSPSGASPSSGDTSLLASSGETSSSLSPSAAPAE) has biased composition (low complexity). The disordered stretch occupies residues 468-554 (PLSPSGASPS…AGKAGTSVGG (87 aa)). A compositionally biased stretch (basic and acidic residues) spans 503–523 (GAREAGKSGESAGRERRDEGS). 5 consecutive transmembrane segments (helical) span residues 574 to 594 (IVSVPLGVVCGFPVARIAATG), 653 to 673 (VLLFQMVPTALEFALVLYLLG), 678 to 698 (GPVACITSLTMAVYVAFTAAV), 761 to 781 (LAFLNFGQQLIFNVGVLGSLA), and 791 to 811 (LLPVGHIVLVSSLLLQLAVPL). An ABC transmembrane type-1 domain is found at 587–823 (VARIAATGFN…VGTIYRETSL (237 aa)). The ABC transporter domain occupies 857-1111 (VAFENVRFAY…ERGLYRALWE (255 aa)). ATP is bound at residue 910–917 (GPSGVGKS).

It belongs to the ABC transporter superfamily. ABCB family. Heavy Metal importer (TC 3.A.1.210) subfamily. As to quaternary structure, homodimer.

The protein resides in the mitochondrion membrane. In terms of biological role, probably transports iron-sulfur clusters in an ATP-dependent manner. Plays a role in [Fe-S] proteins homeostasis. Required for optimal parasite growth and lytic cycle. This chain is ABC transporter ATM1, found in Toxoplasma gondii (strain ATCC 50611 / Me49).